The sequence spans 165 residues: Chorismate pyruvate-lyase (165 aa).

Residues M35, R77, L115, and E156 each coordinate substrate.

It belongs to the UbiC family. In terms of assembly, monomer.

The protein resides in the cytoplasm. It carries out the reaction chorismate = 4-hydroxybenzoate + pyruvate. It functions in the pathway cofactor biosynthesis; ubiquinone biosynthesis. Its function is as follows. Removes the pyruvyl group from chorismate, with concomitant aromatization of the ring, to provide 4-hydroxybenzoate (4HB) for the ubiquinone pathway. This chain is Chorismate pyruvate-lyase, found in Salmonella enteritidis PT4 (strain P125109).